Consider the following 476-residue polypeptide: RuvB-like 1 (476 aa).

The disordered stretch occupies residues 1–23 (MDMEVDEAISGTSSSRLAPIEEV). ATP is bound at residue 89-96 (GPPATGKT).

It belongs to the RuvB family. As to quaternary structure, forms homohexameric rings. May form a dodecamer with ruvb-2 made of two stacked hexameric rings. As to expression, expressed in gonadal cells.

Its subcellular location is the cytoplasm. It localises to the nucleus. The enzyme catalyses ATP + H2O = ADP + phosphate + H(+). In terms of biological role, possesses single-stranded DNA-stimulated ATPase and ATP dependent DNA helicase (3' to 5') activity suggesting a role in nuclear processes such as recombination and transcription. May participate in several chromatin remodeling complexes that mediate the ATP-dependent exchange of histones and remodel chromatin by shifting nucleosomes. Involvement in these complexes is likely required for transcriptional activation of selected genes and DNA repair in response to DNA damage. Involved in the Ce-Tor signaling pathway whereby it is required for the accumulation and localization of box C/D snoRNP to nucleoli to regulate ribosomal maturation and thus protein synthesis. Antagonizes the transcriptional activity of transcription factor pha-4, to control postembryonic development and adult longevity. Has a role in pharyngeal development. Has a role in gonadal development. The sequence is that of RuvB-like 1 from Caenorhabditis elegans.